A 404-amino-acid polypeptide reads, in one-letter code: Double-stranded RNA-binding protein 5 (404 aa).

DRBM domains follow at residues 1–70 (MYKN…RLSL) and 87–155 (VYKN…SLKQ). Disordered stretches follow at residues 195–236 (RRRR…STEE), 263–320 (GGRT…RRNA), and 336–362 (RRRP…FSDP). A compositionally biased stretch (low complexity) spans 263–280 (GGRTQDTASPAPAAAAAS). A compositionally biased stretch (basic residues) spans 302–316 (AGAHAARRHAARQGG).

Functionally, binds double-stranded RNA. This Oryza sativa subsp. japonica (Rice) protein is Double-stranded RNA-binding protein 5 (DRB5).